A 469-amino-acid chain; its full sequence is Desmin (469 aa).

The interval Ser-2–Glu-107 is head. Phosphoserine; by CDK1 is present on Ser-7. Ser-12 carries the phosphoserine; by AURKB modification. Arg-16 is subject to Omega-N-methylarginine. The residue at position 17 (Thr-17) is a Phosphothreonine; by AURKB and ROCK1. 2 positions are modified to phosphoserine; by CDK1: Ser-28 and Ser-32. Arg-37 is modified (asymmetric dimethylarginine; alternate). Arg-37 carries the post-translational modification Omega-N-methylarginine; alternate. Ser-45 is subject to Phosphoserine. Arg-58 is subject to ADP-ribosylarginine. A Phosphoserine; by AURKB modification is found at Ser-60. The residue at position 70 (Arg-70) is an Omega-N-methylarginine. Thr-76 carries the post-translational modification Phosphothreonine; by ROCK1. Ser-81 is subject to Phosphoserine. The 309-residue stretch at Glu-107 to Ile-415 folds into the IF rod domain. The coil 1A stretch occupies residues Lys-108–Asn-140. The interval Arg-141–Val-150 is linker 1. A coil 1B region spans residues Ala-151–Ala-251. Positions Gln-252 to Pro-267 are linker 12. The segment at Pro-267 to Arg-414 is interaction with NEB. A coil 2A region spans residues Asp-268–Lys-286. The linker 2 stretch occupies residues Asn-287–Trp-294. Ser-289, Ser-357, Ser-360, and Ser-423 each carry phosphoserine. Positions Tyr-295–Glu-411 are coil 2B. The tract at residues Glu-412–Leu-469 is tail. The segment at Ser-437–Thr-452 is interaction with CRYAB.

The protein belongs to the intermediate filament family. In terms of assembly, homomer. Interacts with DST. Interacts with MTM1. Interacts with EPPK1; interaction is dependent of higher-order structure of intermediate filament. Interacts with CRYAB. Interacts with NEB (via nebulin repeats 160-164). Interacts (via rod region) with NEBL (via nebulin repeats 1-5). Interacts with ASB2; the interaction targets DES for proteasomal degradation. Interacts with PKP1. Interacts with FLII. ADP-ribosylation prevents ability to form intermediate filaments. In terms of processing, phosphorylation at Ser-7, Ser-28 and Ser-32 by CDK1, phosphorylation at Ser-60 by AURKB and phosphorylation at Thr-76 by ROCK1 contribute to efficient separation of desmin intermediate filaments during mitosis. Post-translationally, ubiquitination by a SCF-like complex containing ASB2 leads to proteasomal degradation.

The protein localises to the cytoplasm. It is found in the myofibril. It localises to the sarcomere. Its subcellular location is the z line. The protein resides in the cell membrane. The protein localises to the sarcolemma. It is found in the nucleus. It localises to the cell tip. Its subcellular location is the nucleus envelope. In terms of biological role, muscle-specific type III intermediate filament essential for proper muscular structure and function. Plays a crucial role in maintaining the structure of sarcomeres, inter-connecting the Z-disks and forming the myofibrils, linking them not only to the sarcolemmal cytoskeleton, but also to the nucleus and mitochondria, thus providing strength for the muscle fiber during activity. In adult striated muscle they form a fibrous network connecting myofibrils to each other and to the plasma membrane from the periphery of the Z-line structures. May act as a sarcomeric microtubule-anchoring protein: specifically associates with detyrosinated tubulin-alpha chains, leading to buckled microtubules and mechanical resistance to contraction. Required for nuclear membrane integrity, via anchoring at the cell tip and nuclear envelope, resulting in maintenance of microtubule-derived intracellular mechanical forces. Contributes to the transcriptional regulation of the NKX2-5 gene in cardiac progenitor cells during a short period of cardiomyogenesis and in cardiac side population stem cells in the adult. Plays a role in maintaining an optimal conformation of nebulette (NEB) on heart muscle sarcomeres to bind and recruit cardiac alpha-actin. This chain is Desmin (DES), found in Canis lupus familiaris (Dog).